The chain runs to 446 residues: Glucosylglycerate hydrolase (446 aa).

Residues tyrosine 36, 40 to 43 (WSWD), tyrosine 88, glutamine 115, and glycine 180 each bind substrate. Aspartate 182 acts as the Proton donor in catalysis. Substrate is bound by residues arginine 216 and 375 to 376 (YW). The Proton acceptor role is filled by glutamate 419. Position 434 (glutamine 434) interacts with substrate.

Belongs to the glycosyl hydrolase 63 family. As to quaternary structure, homotetramer. Dimer of dimers.

It carries out the reaction (2R)-2-O-(alpha-D-glucopyranosyl)-glycerate + H2O = (R)-glycerate + D-glucose. Its activity is regulated as follows. Activity is not dependent on divalent cations, but it is enhanced by Mg(2+). In terms of biological role, catalyzes the hydrolysis of glucosylglycerate (GG) to glycerate and glucose. Involved in recovery from nitrogen starvation by promoting the rapid mobilization of the glucosylglycerate that accumulates under these conditions. Can also hydrolyze mannosylglycerate (MG), with tenfold lower efficiency. The sequence is that of Glucosylglycerate hydrolase from Mycolicibacterium hassiacum (strain DSM 44199 / CIP 105218 / JCM 12690 / 3849) (Mycobacterium hassiacum).